The sequence spans 389 residues: Mannitol-1-phosphate 5-dehydrogenase (389 aa).

Residue 5-16 (AVHFGAGNIGRG) coordinates NAD(+). Lys-215 is an active-site residue.

It belongs to the mannitol dehydrogenase family. As to quaternary structure, monomer.

The enzyme catalyses D-mannitol 1-phosphate + NAD(+) = beta-D-fructose 6-phosphate + NADH + H(+). Its function is as follows. Catalyzes the NAD(H)-dependent interconversion of D-fructose 6-phosphate and D-mannitol 1-phosphate in the mannitol metabolic pathway. The protein is Mannitol-1-phosphate 5-dehydrogenase of Sclerotinia sclerotiorum (strain ATCC 18683 / 1980 / Ss-1) (White mold).